Consider the following 411-residue polypeptide: Serine hydroxymethyltransferase (411 aa).

Residues L117 and 121-123 contribute to the (6S)-5,6,7,8-tetrahydrofolate site; that span reads GHL. K226 bears the N6-(pyridoxal phosphate)lysine mark.

The protein belongs to the SHMT family. As to quaternary structure, homodimer. Requires pyridoxal 5'-phosphate as cofactor.

The protein localises to the cytoplasm. The enzyme catalyses (6R)-5,10-methylene-5,6,7,8-tetrahydrofolate + glycine + H2O = (6S)-5,6,7,8-tetrahydrofolate + L-serine. It functions in the pathway one-carbon metabolism; tetrahydrofolate interconversion. Its pathway is amino-acid biosynthesis; glycine biosynthesis; glycine from L-serine: step 1/1. Functionally, catalyzes the reversible interconversion of serine and glycine with tetrahydrofolate (THF) serving as the one-carbon carrier. This reaction serves as the major source of one-carbon groups required for the biosynthesis of purines, thymidylate, methionine, and other important biomolecules. Also exhibits THF-independent aldolase activity toward beta-hydroxyamino acids, producing glycine and aldehydes, via a retro-aldol mechanism. This chain is Serine hydroxymethyltransferase, found in Syntrophobacter fumaroxidans (strain DSM 10017 / MPOB).